Here is a 130-residue protein sequence, read N- to C-terminus: Small ribosomal subunit protein uS8 (130 aa).

Belongs to the universal ribosomal protein uS8 family. In terms of assembly, part of the 30S ribosomal subunit. Contacts proteins S5 and S12.

In terms of biological role, one of the primary rRNA binding proteins, it binds directly to 16S rRNA central domain where it helps coordinate assembly of the platform of the 30S subunit. This chain is Small ribosomal subunit protein uS8, found in Shewanella loihica (strain ATCC BAA-1088 / PV-4).